Consider the following 445-residue polypeptide: C4-dicarboxylate transport protein (445 aa).

The next 8 helical transmembrane spans lie at 24–44, 62–82, 105–125, 163–183, 201–221, 237–257, 322–342, and 370–390; these read VLYI…WLSP, LIKM…IAHI, FALI…GLAA, GDIL…MALG, FGVI…AMAF, LVAL…GVIA, IYMT…LSFS, and AGTL…VFSI.

This sequence belongs to the dicarboxylate/amino acid:cation symporter (DAACS) (TC 2.A.23) family.

It localises to the cell inner membrane. Functionally, responsible for the transport of dicarboxylates such as succinate, fumarate, and malate from the periplasm across the membrane. This Rhodopseudomonas palustris (strain HaA2) protein is C4-dicarboxylate transport protein.